Consider the following 257-residue polypeptide: UPF0246 protein KPK_4750 (257 aa).

This sequence belongs to the UPF0246 family.

This Klebsiella pneumoniae (strain 342) protein is UPF0246 protein KPK_4750.